Consider the following 214-residue polypeptide: Cell division protein SepF (214 aa).

A disordered region spans residues E25–G51.

This sequence belongs to the SepF family. Homodimer. Interacts with FtsZ.

It is found in the cytoplasm. Its function is as follows. Cell division protein that is part of the divisome complex and is recruited early to the Z-ring. Probably stimulates Z-ring formation, perhaps through the cross-linking of FtsZ protofilaments. Its function overlaps with FtsA. This is Cell division protein SepF from Mycolicibacterium smegmatis (strain ATCC 700084 / mc(2)155) (Mycobacterium smegmatis).